A 188-amino-acid chain; its full sequence is Elongation factor P (188 aa).

It belongs to the elongation factor P family.

It is found in the cytoplasm. It functions in the pathway protein biosynthesis; polypeptide chain elongation. Involved in peptide bond synthesis. Stimulates efficient translation and peptide-bond synthesis on native or reconstituted 70S ribosomes in vitro. Probably functions indirectly by altering the affinity of the ribosome for aminoacyl-tRNA, thus increasing their reactivity as acceptors for peptidyl transferase. In Rhodospirillum centenum (strain ATCC 51521 / SW), this protein is Elongation factor P.